Reading from the N-terminus, the 491-residue chain is Keratin, type I cytoskeletal 39 (491 aa).

The segment at 1–96 is head; sequence MDTKGCTTTN…WYGEGINSNE (96 aa). The 312-residue stretch at 96 to 407 folds into the IF rod domain; it reads EKETMQILNE…SLLESSDGKR (312 aa). Residues 97–131 are coil 1A; that stretch reads KETMQILNERLANYLQKVRMLERENAELESKIQEE. The linker 1 stretch occupies residues 132–142; that stretch reads SNKELPVLCPD. Positions 143-243 are coil 1B; that stretch reads YLSYYTTIEE…HKEEINSLQC (101 aa). The interval 244–259 is linker 12; sequence QLGERLDIEVTAAPSA. The tract at residues 260–403 is coil 2; the sequence is DLNQVLQEMR…TTYRSLLESS (144 aa). The tail stretch occupies residues 404-491; the sequence is DGKRPCYPRA…PCFIIRPAKV (88 aa).

The protein belongs to the intermediate filament family. As to quaternary structure, heterotetramer of two type I and two type II keratins. In terms of tissue distribution, expressed in skin and scalp. In the hair follicle, it is present in the upper hair cuticle and the upper cortex. Also present in the in the upper portion of beard hairs (at protein level).

Its function is as follows. May play a role in late hair differentiation. The chain is Keratin, type I cytoskeletal 39 (KRT39) from Homo sapiens (Human).